Here is a 157-residue protein sequence, read N- to C-terminus: UPF0212 protein rrnAC1165 (157 aa).

Positions 105–157 (VLEIEEIPEESDETTEDESSSAESEADADDPPSDQSADESDDVLPEFEELIDE) are disordered. The segment covering 106–157 (LEIEEIPEESDETTEDESSSAESEADADDPPSDQSADESDDVLPEFEELIDE) has biased composition (acidic residues).

Belongs to the UPF0212 family.

In Haloarcula marismortui (strain ATCC 43049 / DSM 3752 / JCM 8966 / VKM B-1809) (Halobacterium marismortui), this protein is UPF0212 protein rrnAC1165.